Here is a 204-residue protein sequence, read N- to C-terminus: UPF0056 membrane protein CT_852 (204 aa).

6 helical membrane-spanning segments follow: residues threonine 9–leucine 29, histidine 39–glycine 59, leucine 66–isoleucine 86, isoleucine 107–glycine 127, isoleucine 138–serine 158, and phenylalanine 176–phenylalanine 196.

This sequence belongs to the UPF0056 (MarC) family.

Its subcellular location is the cell membrane. The sequence is that of UPF0056 membrane protein CT_852 from Chlamydia trachomatis serovar D (strain ATCC VR-885 / DSM 19411 / UW-3/Cx).